The chain runs to 129 residues: Large ribosomal subunit protein bL12c (129 aa).

It belongs to the bacterial ribosomal protein bL12 family. As to quaternary structure, homodimer. Part of the ribosomal stalk of the 50S ribosomal subunit. Forms a multimeric L10(L12)X complex, where L10 forms an elongated spine to which 2 to 4 L12 dimers bind in a sequential fashion. Binds GTP-bound translation factors.

Its subcellular location is the plastid. The protein localises to the chloroplast. In terms of biological role, forms part of the ribosomal stalk which helps the ribosome interact with GTP-bound translation factors. Is thus essential for accurate translation. The polypeptide is Large ribosomal subunit protein bL12c (Tupiella akineta (Green alga)).